Consider the following 122-residue polypeptide: Large ribosomal subunit protein uL14 (122 aa).

This sequence belongs to the universal ribosomal protein uL14 family. In terms of assembly, part of the 50S ribosomal subunit. Forms a cluster with proteins L3 and L19. In the 70S ribosome, L14 and L19 interact and together make contacts with the 16S rRNA in bridges B5 and B8.

Its function is as follows. Binds to 23S rRNA. Forms part of two intersubunit bridges in the 70S ribosome. The sequence is that of Large ribosomal subunit protein uL14 from Alkalilimnicola ehrlichii (strain ATCC BAA-1101 / DSM 17681 / MLHE-1).